Consider the following 283-residue polypeptide: Putative S-adenosyl-L-methionine-dependent methyltransferase SCO7813 (283 aa).

S-adenosyl-L-methionine contacts are provided by residues Asp-121 and 150–151 (DL). The disordered stretch occupies residues 264–283 (MSTLPQHEDGPGGLISAVRR).

This sequence belongs to the UPF0677 family.

Exhibits S-adenosyl-L-methionine-dependent methyltransferase activity. This is Putative S-adenosyl-L-methionine-dependent methyltransferase SCO7813 from Streptomyces coelicolor (strain ATCC BAA-471 / A3(2) / M145).